Consider the following 141-residue polypeptide: Large ribosomal subunit protein uL11 (141 aa).

The protein belongs to the universal ribosomal protein uL11 family. Part of the ribosomal stalk of the 50S ribosomal subunit. Interacts with L10 and the large rRNA to form the base of the stalk. L10 forms an elongated spine to which L12 dimers bind in a sequential fashion forming a multimeric L10(L12)X complex. Post-translationally, one or more lysine residues are methylated.

Functionally, forms part of the ribosomal stalk which helps the ribosome interact with GTP-bound translation factors. The polypeptide is Large ribosomal subunit protein uL11 (Petrotoga mobilis (strain DSM 10674 / SJ95)).